The primary structure comprises 150 residues: Testis-expressed protein 22 (150 aa).

The span at 1 to 23 (MDSRKLSPRGKKLESHLSQEHRR) shows a compositional bias: basic and acidic residues. The segment at 1-26 (MDSRKLSPRGKKLESHLSQEHRRPPL) is disordered.

It localises to the cytoplasm. It is found in the cytoplasmic vesicle. The protein resides in the secretory vesicle. Its subcellular location is the acrosome. This chain is Testis-expressed protein 22 (TEX22), found in Homo sapiens (Human).